The primary structure comprises 784 residues: LPS-assembly protein LptD (784 aa).

Residues M1–A24 form the signal peptide. 2 cysteine pairs are disulfide-bonded: C31-C724 and C173-C725.

The protein belongs to the LptD family. As to quaternary structure, component of the lipopolysaccharide transport and assembly complex. Interacts with LptE and LptA. May interact with LptE during assembly of LptD by the beta-barrel assembly machine (BAM). Also interacts with LptM, which promotes the efficient assembly of the LptDE translocon by the BAM complex. In terms of processing, contains two intramolecular disulfide bonds. At least one disulfide bond is required for activity, and protein is probably fully oxidized in vivo.

It localises to the cell outer membrane. In terms of biological role, together with LptE, is involved in the assembly of lipopolysaccharide (LPS) at the surface of the outer membrane. Contributes to n-hexane resistance. The chain is LPS-assembly protein LptD from Escherichia coli (strain K12).